Here is a 149-residue protein sequence, read N- to C-terminus: Large ribosomal subunit protein bL9 (149 aa).

It belongs to the bacterial ribosomal protein bL9 family.

Its function is as follows. Binds to the 23S rRNA. This is Large ribosomal subunit protein bL9 from Salmonella agona (strain SL483).